Reading from the N-terminus, the 446-residue chain is Phosphoglucosamine mutase (446 aa).

S100 serves as the catalytic Phosphoserine intermediate. Residues S100, D239, D241, and D243 each coordinate Mg(2+). S100 is modified (phosphoserine).

The protein belongs to the phosphohexose mutase family. Mg(2+) is required as a cofactor. In terms of processing, activated by phosphorylation.

It catalyses the reaction alpha-D-glucosamine 1-phosphate = D-glucosamine 6-phosphate. Functionally, catalyzes the conversion of glucosamine-6-phosphate to glucosamine-1-phosphate. This chain is Phosphoglucosamine mutase, found in Shouchella clausii (strain KSM-K16) (Alkalihalobacillus clausii).